We begin with the raw amino-acid sequence, 132 residues long: Mercuric resistance operon regulatory protein (132 aa).

In terms of domain architecture, HTH merR-type spans 2–71 (KFRIGELADK…LNEIDKLLGV (70 aa)). The H-T-H motif DNA-binding region spans 5–24 (IGELADKCGVNKETIRYYER). Positions 79, 114, and 123 each coordinate Hg(2+).

As to quaternary structure, homodimer.

Mediates the mercuric-dependent induction of mercury resistance operon. In the absence of mercury MerR represses transcription by binding tightly to the mer operator region; when mercury is present the dimeric complex binds a single ion and becomes a potent transcriptional activator, while remaining bound to the mer site. This Bacillus cereus protein is Mercuric resistance operon regulatory protein (merR1).